Here is a 64-residue protein sequence, read N- to C-terminus: Large ribosomal subunit protein bL33c (64 aa).

The protein belongs to the bacterial ribosomal protein bL33 family.

The protein resides in the plastid. It localises to the organellar chromatophore. The polypeptide is Large ribosomal subunit protein bL33c (Paulinella chromatophora).